The sequence spans 297 residues: Bifunctional protein FolD (297 aa).

NADP(+) is bound by residues 169 to 171 (GRS), Ser196, and Ile237.

This sequence belongs to the tetrahydrofolate dehydrogenase/cyclohydrolase family. In terms of assembly, homodimer.

The enzyme catalyses (6R)-5,10-methylene-5,6,7,8-tetrahydrofolate + NADP(+) = (6R)-5,10-methenyltetrahydrofolate + NADPH. It carries out the reaction (6R)-5,10-methenyltetrahydrofolate + H2O = (6R)-10-formyltetrahydrofolate + H(+). Its pathway is one-carbon metabolism; tetrahydrofolate interconversion. In terms of biological role, catalyzes the oxidation of 5,10-methylenetetrahydrofolate to 5,10-methenyltetrahydrofolate and then the hydrolysis of 5,10-methenyltetrahydrofolate to 10-formyltetrahydrofolate. In Salinibacter ruber (strain DSM 13855 / M31), this protein is Bifunctional protein FolD.